The sequence spans 269 residues: Tryptophan synthase alpha chain (269 aa).

Catalysis depends on proton acceptor residues Glu49 and Asp60.

This sequence belongs to the TrpA family. In terms of assembly, tetramer of two alpha and two beta chains.

The enzyme catalyses (1S,2R)-1-C-(indol-3-yl)glycerol 3-phosphate + L-serine = D-glyceraldehyde 3-phosphate + L-tryptophan + H2O. It functions in the pathway amino-acid biosynthesis; L-tryptophan biosynthesis; L-tryptophan from chorismate: step 5/5. Its function is as follows. The alpha subunit is responsible for the aldol cleavage of indoleglycerol phosphate to indole and glyceraldehyde 3-phosphate. The polypeptide is Tryptophan synthase alpha chain (Pseudomonas fluorescens (strain SBW25)).